Here is a 111-residue protein sequence, read N- to C-terminus: Nucleoid-associated protein Tmel_0542 (111 aa).

This sequence belongs to the YbaB/EbfC family. In terms of assembly, homodimer.

It is found in the cytoplasm. The protein localises to the nucleoid. Functionally, binds to DNA and alters its conformation. May be involved in regulation of gene expression, nucleoid organization and DNA protection. In Thermosipho melanesiensis (strain DSM 12029 / CIP 104789 / BI429), this protein is Nucleoid-associated protein Tmel_0542.